The chain runs to 500 residues: Amino-acid acetyltransferase, mitochondrial (500 aa).

Residues 1–19 (MQKPSLSQDLIWILKSVQS) constitute a mitochondrion transit peptide. Positions 336-496 (FLGPKCLTDG…YMSVIDKIQP (161 aa)) constitute an N-acetyltransferase domain.

This sequence belongs to the acetyltransferase family.

Its subcellular location is the mitochondrion. It carries out the reaction L-glutamate + acetyl-CoA = N-acetyl-L-glutamate + CoA + H(+). Its pathway is amino-acid biosynthesis; L-arginine biosynthesis; N(2)-acetyl-L-ornithine from L-glutamate: step 1/4. In terms of biological role, N-acetylglutamate synthase involved in arginine biosynthesis. The protein is Amino-acid acetyltransferase, mitochondrial (arg6) of Schizosaccharomyces pombe (strain 972 / ATCC 24843) (Fission yeast).